Here is a 292-residue protein sequence, read N- to C-terminus: Peroxidase 2 (292 aa).

Intrachain disulfides connect C7–C86, C40–C45, C92–C288, and C171–C199. The Proton acceptor role is filled by H38. Ca(2+) is bound by residues D39, V42, G44, D46, and S48. N-linked (GlcNAc...) asparagine glycosylation occurs at N68. Residue P134 coordinates substrate. N-linked (GlcNAc...) asparagine glycosylation is present at N139. H164 lines the heme b pocket. Residue T165 participates in Ca(2+) binding. Residue N179 is glycosylated (N-linked (GlcNAc...) asparagine). Residues D210, T213, and D218 each contribute to the Ca(2+) site.

The protein belongs to the peroxidase family. Classical plant (class III) peroxidase subfamily. It depends on Ca(2+) as a cofactor. The cofactor is heme b.

The catalysed reaction is 2 a phenolic donor + H2O2 = 2 a phenolic radical donor + 2 H2O. Functionally, removal of H(2)O(2), oxidation of toxic reductants, biosynthesis and degradation of lignin, suberization, auxin catabolism, response to environmental stresses such as wounding, pathogen attack and oxidative stress. These functions might be dependent on each isozyme/isoform in each plant tissue. The protein is Peroxidase 2 of Cucumis sativus (Cucumber).